The following is a 418-amino-acid chain: L-glutamine:2-deoxy-scyllo-inosose aminotransferase (418 aa).

K192 bears the N6-(pyridoxal phosphate)lysine mark.

The protein belongs to the DegT/DnrJ/EryC1 family. L-glutamine:2-deoxy-scyllo-inosose/scyllo-inosose aminotransferase subfamily. It depends on pyridoxal 5'-phosphate as a cofactor.

The enzyme catalyses 2-deoxy-L-scyllo-inosose + L-glutamine = 2-deoxy-scyllo-inosamine + 2-oxoglutaramate. It catalyses the reaction 3-amino-2,3-dideoxy-scyllo-inosose + L-glutamine = 2-deoxystreptamine + 2-oxoglutaramate. It functions in the pathway metabolic intermediate biosynthesis; 2-deoxystreptamine biosynthesis; 2-deoxystreptamine from D-glucose 6-phosphate: step 2/4. Its pathway is metabolic intermediate biosynthesis; 2-deoxystreptamine biosynthesis; 2-deoxystreptamine from D-glucose 6-phosphate: step 4/4. It participates in antibiotic biosynthesis; butirosin biosynthesis. Its function is as follows. Catalyzes the PLP-dependent transamination of 2-deoxy-scyllo-inosose (2-DOI) to form 2-deoxy-scyllo-inosamine (2-DOIA) using L-glutamine as the amino donor. Also catalyzes the transamination of 3-amino-2,3-dideoxy-scyllo-inosose (keto-2-DOIA) into 2-deoxystreptamine (2-DOS). The sequence is that of L-glutamine:2-deoxy-scyllo-inosose aminotransferase (btrR) from Niallia circulans (Bacillus circulans).